Reading from the N-terminus, the 297-residue chain is Probable terminal-alkyne amino-acid exporter (297 aa).

The next 9 helical transmembrane spans lie at 6–26, 32–52, 65–85, 95–115, 123–143, 150–170, 178–198, 212–232, and 249–269; these read AVWALVLTVVTWASAFPAIRV, GVAGLSLSRLTVASVALAIAA, LPMIALCGATGMSAYQVLLNW, ASLLIAIAPVFSVLLAAVFLG, IAGSAVAISGAAVIAVAGGHA, WVVLAAAVVQGVYHFATKPLL, VACYAMWAGTVFLLPLLPAMV, TVYLGLLPSAIGFVSWGYAVA, and VALVVAFVWLGEVPPPLALVG. EamA domains lie at 6-137 and 150-281; these read AVWA…AVIA and WVVL…MLIN.

The protein belongs to the EamA transporter family.

It is found in the cell membrane. Functionally, probably involved in the export of terminal alkyne-containing amino acids, namely L-propargylglycine (Pra) and L-beta-ethynylserine, that are antibiotics synthesized by enzymes encoded in the same gene cluster. The sequence is that of Probable terminal-alkyne amino-acid exporter from Streptantibioticus cattleyicolor (strain ATCC 35852 / DSM 46488 / JCM 4925 / NBRC 14057 / NRRL 8057) (Streptomyces cattleya).